The primary structure comprises 131 residues: Probable ATP synthase subunit g 2, mitochondrial (131 aa).

It belongs to the ATPase g subunit family. Subunit of the F-type ATPase which has 2 components, CF(1) - the catalytic core - and CF(0) - the membrane proton channel.

The protein resides in the mitochondrion membrane. Mitochondrial membrane ATP synthase (F(1)F(0) ATP synthase or Complex V) produces ATP from ADP in the presence of a proton gradient across the membrane which is generated by electron transport complexes of the respiratory chain. F-type ATPases consist of two structural domains, F(1) - containing the extramembraneous catalytic core, and F(0) - containing the membrane proton channel, linked together by a central stalk and a peripheral stalk. During catalysis, ATP synthesis in the catalytic domain of F(1) is coupled via a rotary mechanism of the central stalk subunits to proton translocation. Part of the complex F(0) domain. Minor subunit located with subunit a in the membrane. The protein is Probable ATP synthase subunit g 2, mitochondrial of Caenorhabditis elegans.